We begin with the raw amino-acid sequence, 284 residues long: Asialoglycoprotein receptor 1 (284 aa).

At 1–39 (MTKDYQDFQHLDNENDHHQLQRGPPPAPRLLQRLCSGFR) the chain is on the cytoplasmic side. The Endocytosis signal signature appears at 5–8 (YQDF). Cysteine 35 carries the S-palmitoyl cysteine lipid modification. Residues 40-60 (LFLLSLGLSILLLVVVCVITS) form a helical; Signal-anchor for type II membrane protein membrane-spanning segment. The stretch at 58-122 (ITSQNSQLRE…EDLREDHSRL (65 aa)) forms a coiled coil. The Extracellular portion of the chain corresponds to 61-284 (QNSQLREDLR…VCETELGKAN (224 aa)). 3 N-linked (GlcNAc...) asparagine glycosylation sites follow: asparagine 75, asparagine 78, and asparagine 146. 3 cysteine pairs are disulfide-bonded: cysteine 153–cysteine 164, cysteine 181–cysteine 276, and cysteine 254–cysteine 268. The region spanning 160 to 277 (YEGSCYWFSS…CRRPYRWVCE (118 aa)) is the C-type lectin domain. The Ca(2+) site is built by valine 190, glutamate 196, aspartate 215, glutamine 239, aspartate 241, aspartate 242, glutamate 252, aspartate 253, asparagine 264, aspartate 265, and glutamate 277.

Interacts with LASS2. Phosphorylated on a cytoplasmic Ser residue. As to expression, expressed exclusively in hepatic parenchymal cells.

The protein resides in the membrane. Mediates the endocytosis of plasma glycoproteins to which the terminal sialic acid residue on their complex carbohydrate moieties has been removed. The receptor recognizes terminal galactose and N-acetylgalactosamine units. After ligand binding to the receptor, the resulting complex is internalized and transported to a sorting organelle, where receptor and ligand are disassociated. The receptor then returns to the cell membrane surface. The sequence is that of Asialoglycoprotein receptor 1 (Asgr1) from Rattus norvegicus (Rat).